The sequence spans 217 residues: Peptide deformylase 1 (217 aa).

2 residues coordinate Fe cation: C129 and H171. E172 is an active-site residue. H175 is a Fe cation binding site.

Belongs to the polypeptide deformylase family. Requires Fe(2+) as cofactor.

The catalysed reaction is N-terminal N-formyl-L-methionyl-[peptide] + H2O = N-terminal L-methionyl-[peptide] + formate. Functionally, removes the formyl group from the N-terminal Met of newly synthesized proteins. Requires at least a dipeptide for an efficient rate of reaction. N-terminal L-methionine is a prerequisite for activity but the enzyme has broad specificity at other positions. This Bifidobacterium longum (strain NCC 2705) protein is Peptide deformylase 1.